Here is a 570-residue protein sequence, read N- to C-terminus: Auxin efflux carrier component 6 (570 aa).

Residues 1-6 (MITGNE) lie on the Extracellular side of the membrane. Residues 7-27 (FYTVMCAMAPLYFAMFVAYGS) form a helical membrane-spanning segment. Residues 28 to 38 (VKWCKIFTPAQ) lie on the Cytoplasmic side of the membrane. A helical membrane pass occupies residues 39–59 (CSGINRFVSVFAVPVLSFHFI). V51 is a (indol-3-yl)acetate binding site. Over 60–70 (SQNNPYKMDTM) the chain is Extracellular. The helical transmembrane segment at 71–91 (FILADTLSKIFVFVLLSLWAV) threads the bilayer. Over 92 to 100 (FFKAGGLDW) the chain is Cytoplasmic. A helical membrane pass occupies residues 101 to 121 (LITLFSIATLPNTLVMGIPLL). (indol-3-yl)acetate contacts are provided by N112 and L114. The Extracellular segment spans residues 122–131 (QAMYGDYTQT). The helical transmembrane segment at 132 to 152 (LMVQLVVLQCIIWYTLLLFLF) threads the bilayer. Y145 is a binding site for (indol-3-yl)acetate. Residues 153–430 (ELRAARLLIR…LSRNPNTYSS (278 aa)) lie on the Cytoplasmic side of the membrane. A phosphoserine mark is found at S230 and S308. Residues 431–451 (LLGLVWSLISFKWNIPMPNIV) traverse the membrane as a helical segment. Topologically, residues 452–454 (DFS) are extracellular. Residues 455-475 (IKIISDAGLGMAMFSLGLFMA) form a helical membrane-spanning segment. Over 476–491 (LQPKMIPCGAKKATMG) the chain is Cytoplasmic. A helical membrane pass occupies residues 492–512 (MLIRFISGPLFMAGASLLVGL). At 513 to 515 (RGS) the chain is on the extracellular side. A helical membrane pass occupies residues 516-536 (RLHAAIVQAALPQGIVPFVFA). I530 and V531 together coordinate (indol-3-yl)acetate. Residues 537 to 549 (REYNLHPDLLSTL) lie on the Cytoplasmic side of the membrane. A helical transmembrane segment spans residues 550–570 (VIFGMIVSLPVTILYYVLLGL).

Belongs to the auxin efflux carrier (TC 2.A.69.1) family. In terms of assembly, homodimer. As to expression, expressed in the vasculature of the primary root, cotyledons, floral stem, sepals and the main transmitting tract of the reproductive silique. Expressed in embryos, shoot meristem, root tip and lateral root meristems. Expressed in the nectaries and the floral organ boundaries of the anthers. Detected in pollen. Expressed in broad subepidermal domains that narrowed to sites of vein formation. Expressed in veins of mature leaves.

It localises to the endoplasmic reticulum membrane. Functionally, component of the intracellular auxin-transport pathway. Regulates auxin transport and auxin homeostasis. Directly involved in the regulation of nectar production. Involved in unfolded protein response (UPR) activation. Involved in the control of vein patterning. Redundantly with PIN8, inhibits the vein-formation-promoting functions of PIN5. PIN5, PIN6, and PIN8 control vein network geometry, but they are expressed in mutually exclusive domains of leaf vascular cells. This chain is Auxin efflux carrier component 6, found in Arabidopsis thaliana (Mouse-ear cress).